The following is a 254-amino-acid chain: Large ribosomal subunit protein uL15m (254 aa).

A mitochondrion-targeting transit peptide spans 1–78; sequence MFNILSRVCR…GSGQRRGRRI (78 aa). The interval 44–104 is disordered; that stretch reads NYQSKKRVGR…KVGHSTGHLK (61 aa). A compositionally biased stretch (basic residues) spans 64 to 79; sequence GRGHKGSGQRRGRRIK.

The protein belongs to the universal ribosomal protein uL15 family. In terms of assembly, component of the mitochondrial large ribosomal subunit (mt-LSU). Mature yeast 74S mitochondrial ribosomes consist of a small (37S) and a large (54S) subunit. The 37S small subunit contains a 15S ribosomal RNA (15S mt-rRNA) and at least 32 different proteins. The 54S large subunit contains a 21S rRNA (21S mt-rRNA) and at least 45 different proteins.

It localises to the mitochondrion. In terms of biological role, component of the mitochondrial ribosome (mitoribosome), a dedicated translation machinery responsible for the synthesis of mitochondrial genome-encoded proteins, including at least some of the essential transmembrane subunits of the mitochondrial respiratory chain. The mitoribosomes are attached to the mitochondrial inner membrane and translation products are cotranslationally integrated into the membrane. The protein is Large ribosomal subunit protein uL15m (mrpl10) of Schizosaccharomyces pombe (strain 972 / ATCC 24843) (Fission yeast).